We begin with the raw amino-acid sequence, 399 residues long: UDP-galactopyranose mutase (399 aa).

FAD-binding residues include Phe18, Glu38, Asn46, and Leu66. 4 residues coordinate UDP-alpha-D-galactose: Phe157, Thr162, Trp166, and Tyr191. An FAD-binding site is contributed by 224-225 (DW). UDP-alpha-D-galactose contacts are provided by Asn282, Arg292, and Tyr328. Arg360 contacts FAD. Residue Tyr366 participates in UDP-alpha-D-galactose binding. 367 to 369 (LDM) contacts FAD.

This sequence belongs to the UDP-galactopyranose/dTDP-fucopyranose mutase family. In terms of assembly, homotetramer. FAD serves as cofactor.

It catalyses the reaction UDP-alpha-D-galactose = UDP-alpha-D-galactofuranose. It participates in cell wall biogenesis; cell wall polysaccharide biosynthesis. Its function is as follows. Catalyzes the interconversion through a 2-keto intermediate of uridine diphosphogalactopyranose (UDP-GalP) into uridine diphosphogalactofuranose (UDP-GalF) which is a key building block for cell wall construction in Mycobacterium tuberculosis. This Mycobacterium tuberculosis (strain CDC 1551 / Oshkosh) protein is UDP-galactopyranose mutase (glf).